The sequence spans 145 residues: D-aminoacyl-tRNA deacylase (145 aa).

The Gly-cisPro motif, important for rejection of L-amino acids motif lies at 137-138 (GP).

The protein belongs to the DTD family. Homodimer.

The protein localises to the cytoplasm. It carries out the reaction glycyl-tRNA(Ala) + H2O = tRNA(Ala) + glycine + H(+). The catalysed reaction is a D-aminoacyl-tRNA + H2O = a tRNA + a D-alpha-amino acid + H(+). An aminoacyl-tRNA editing enzyme that deacylates mischarged D-aminoacyl-tRNAs. Also deacylates mischarged glycyl-tRNA(Ala), protecting cells against glycine mischarging by AlaRS. Acts via tRNA-based rather than protein-based catalysis; rejects L-amino acids rather than detecting D-amino acids in the active site. By recycling D-aminoacyl-tRNA to D-amino acids and free tRNA molecules, this enzyme counteracts the toxicity associated with the formation of D-aminoacyl-tRNA entities in vivo and helps enforce protein L-homochirality. In Ectopseudomonas mendocina (strain ymp) (Pseudomonas mendocina), this protein is D-aminoacyl-tRNA deacylase.